Reading from the N-terminus, the 310-residue chain is Phosphoribosylaminoimidazole-succinocarboxamide synthase (310 aa).

It belongs to the SAICAR synthetase family.

The catalysed reaction is 5-amino-1-(5-phospho-D-ribosyl)imidazole-4-carboxylate + L-aspartate + ATP = (2S)-2-[5-amino-1-(5-phospho-beta-D-ribosyl)imidazole-4-carboxamido]succinate + ADP + phosphate + 2 H(+). It functions in the pathway purine metabolism; IMP biosynthesis via de novo pathway; 5-amino-1-(5-phospho-D-ribosyl)imidazole-4-carboxamide from 5-amino-1-(5-phospho-D-ribosyl)imidazole-4-carboxylate: step 1/2. This is Phosphoribosylaminoimidazole-succinocarboxamide synthase from Xanthomonas axonopodis pv. citri (strain 306).